The sequence spans 246 residues: Exosome complex component Rrp41 (246 aa).

This sequence belongs to the RNase PH family. Rrp41 subfamily. In terms of assembly, component of the archaeal exosome complex. Forms a hexameric ring-like arrangement composed of 3 Rrp41-Rrp42 heterodimers. The hexameric ring associates with a trimer of Rrp4 and/or Csl4 subunits.

It is found in the cytoplasm. Catalytic component of the exosome, which is a complex involved in RNA degradation. Has 3'-&gt;5' exoribonuclease activity. Can also synthesize heteromeric RNA-tails. The sequence is that of Exosome complex component Rrp41 from Pyrobaculum calidifontis (strain DSM 21063 / JCM 11548 / VA1).